The chain runs to 183 residues: MKLLFPIFASLMLQYQVNTEFIGLRSCLMGFGRCRDHCNVDEKEIQKCKMKKCCVGPKVVKLIKNYLQYGTPNVLNEDVQEMLKPAENSSAVIQRKHILSILPQIKSINFFANTNLVIIPNATPVNSATVSTMTSGQITYTATSAKSNTKESGDSATASPPPAPPPPNILPTPSLELEEAEEQ.

The first 19 residues, 1-19 (MKLLFPIFASLMLQYQVNT), serve as a signal peptide directing secretion. 3 cysteine pairs are disulfide-bonded: C27-C53, C34-C48, and C38-C54. The interval 142-183 (ATSAKSNTKESGDSATASPPPAPPPPNILPTPSLELEEAEEQ) is disordered. Residues 159-170 (SPPPAPPPPNIL) are compositionally biased toward pro residues.

It belongs to the beta-defensin family.

The protein resides in the secreted. Has antibacterial activity. The sequence is that of Beta-defensin 129 (DEFB129) from Macaca fascicularis (Crab-eating macaque).